The following is a 630-amino-acid chain: Elongation factor 4 (630 aa).

The disordered stretch occupies residues 1–22; sequence MTVARNRAGAGPGKGSPISSFA. The 182-residue stretch at 30–211 folds into the tr-type G domain; the sequence is ARIRNFCIIA…EVVRQVPAPV (182 aa). GTP is bound by residues 42 to 47 and 158 to 161; these read DHGKST and NKID.

Belongs to the TRAFAC class translation factor GTPase superfamily. Classic translation factor GTPase family. LepA subfamily.

It localises to the cell membrane. It carries out the reaction GTP + H2O = GDP + phosphate + H(+). In terms of biological role, required for accurate and efficient protein synthesis under certain stress conditions. May act as a fidelity factor of the translation reaction, by catalyzing a one-codon backward translocation of tRNAs on improperly translocated ribosomes. Back-translocation proceeds from a post-translocation (POST) complex to a pre-translocation (PRE) complex, thus giving elongation factor G a second chance to translocate the tRNAs correctly. Binds to ribosomes in a GTP-dependent manner. The chain is Elongation factor 4 from Rhodococcus opacus (strain B4).